We begin with the raw amino-acid sequence, 417 residues long: Phosphoglycerate kinase (417 aa).

Substrate is bound by residues Asp24–Asn26, Arg44, His67–Arg70, Arg126, and Arg170. ATP is bound by residues Lys220, Gly316, Glu347, and Gly373–Ser376.

It belongs to the phosphoglycerate kinase family. As to quaternary structure, monomer.

The protein resides in the cytoplasm. The catalysed reaction is (2R)-3-phosphoglycerate + ATP = (2R)-3-phospho-glyceroyl phosphate + ADP. It participates in carbohydrate degradation; glycolysis; pyruvate from D-glyceraldehyde 3-phosphate: step 2/5. The protein is Phosphoglycerate kinase of Renibacterium salmoninarum (strain ATCC 33209 / DSM 20767 / JCM 11484 / NBRC 15589 / NCIMB 2235).